A 92-amino-acid chain; its full sequence is Small ribosomal subunit protein uS19 (92 aa).

Belongs to the universal ribosomal protein uS19 family.

Protein S19 forms a complex with S13 that binds strongly to the 16S ribosomal RNA. The sequence is that of Small ribosomal subunit protein uS19 from Malacoplasma penetrans (strain HF-2) (Mycoplasma penetrans).